Here is a 395-residue protein sequence, read N- to C-terminus: Xylose isomerase (395 aa).

Catalysis depends on residues His54 and Asp57. Glu181, Glu217, His220, Asp245, Asp255, Asp257, and Asp293 together coordinate Mg(2+).

The protein belongs to the xylose isomerase family. As to quaternary structure, homotetramer. The cofactor is Mg(2+).

It is found in the cytoplasm. The enzyme catalyses alpha-D-xylose = alpha-D-xylulofuranose. In Arthrobacter sp. (strain NRRL B3728), this protein is Xylose isomerase (xylA).